The following is a 204-amino-acid chain: Large ribosomal subunit protein eL15 (204 aa).

It belongs to the eukaryotic ribosomal protein eL15 family.

This chain is Large ribosomal subunit protein eL15 (RpL15), found in Anopheles gambiae (African malaria mosquito).